We begin with the raw amino-acid sequence, 300 residues long: C-4 methylsterol oxidase erg25 (300 aa).

The 137-residue stretch at 140 to 276 folds into the Fatty acid hydroxylase domain; sequence TLFFFLEDTW…FRWWDAVLKT (137 aa). The short motif at 154 to 158 is the Histidine box-1 element; the sequence is HRLFH. The Histidine box-2 motif lies at 167–171; the sequence is HKVHH. A helical transmembrane segment spans residues 186–206; it reads PLEIILLGAGTVFVPLMWCYF. Positions 251–257 match the Histidine box-3 motif; the sequence is HHDYHHM.

Belongs to the sterol desaturase family. As to quaternary structure, heterotetramer of erg25, erg26, erg27 and erg28. Erg28 acts as a scaffold to tether erg27 and other 4,4-demethylation-related enzymes, forming a demethylation enzyme complex, in the endoplasmic reticulum. The cofactor is Fe cation.

The protein localises to the endoplasmic reticulum membrane. It catalyses the reaction 4,4-dimethyl-5alpha-cholesta-8,24-dien-3beta-ol + 6 Fe(II)-[cytochrome b5] + 3 O2 + 5 H(+) = 4beta-methylzymosterol-4alpha-carboxylate + 6 Fe(III)-[cytochrome b5] + 4 H2O. It carries out the reaction 4alpha-methylzymosterol + 6 Fe(II)-[cytochrome b5] + 3 O2 + 5 H(+) = 4alpha-carboxyzymosterol + 6 Fe(III)-[cytochrome b5] + 4 H2O. It participates in steroid biosynthesis; zymosterol biosynthesis; zymosterol from lanosterol: step 3/6. It functions in the pathway steroid metabolism; ergosterol biosynthesis. In terms of biological role, C-4 methylsterol oxidase; part of the third module of ergosterol biosynthesis pathway that includes by the late steps of the pathway. Erg25 is a catalytic component of the C-4 demethylation complex that catalyzes the three-step monooxygenation required for the demethylation of 4,4-dimethyl and 4alpha-methylsterols. The third module or late pathway involves the ergosterol synthesis itself through consecutive reactions that mainly occur in the endoplasmic reticulum (ER) membrane. Firstly, the squalene synthase erg9 catalyzes the condensation of 2 farnesyl pyrophosphate moieties to form squalene, which is the precursor of all steroids. Secondly, squalene is converted into lanosterol by the consecutive action of the squalene epoxidase erg1 and the lanosterol synthase erg7. The lanosterol 14-alpha-demethylase erg11/cyp1 catalyzes C14-demethylation of lanosterol to produce 4,4'-dimethyl cholesta-8,14,24-triene-3-beta-ol. In the next steps, a complex process involving various demethylation, reduction and desaturation reactions catalyzed by the C-14 reductase erg24 and the C-4 demethylation complex erg25-erg26-erg27 leads to the production of zymosterol. Erg28 likely functions in the C-4 demethylation complex reaction by tethering erg26 and Erg27 to the endoplasmic reticulum or to facilitate interaction between these proteins. Then, the sterol 24-C-methyltransferase erg6 catalyzes the methyl transfer from S-adenosyl-methionine to the C-24 of zymosterol to form fecosterol. The C-8 sterol isomerase erg2 catalyzes the reaction which results in unsaturation at C-7 in the B ring of sterols and thus converts fecosterol to episterol. The sterol-C5-desaturases erg31 and erg32 then catalyze the introduction of a C-5 double bond in the B ring to produce 5-dehydroepisterol. The C-22 sterol desaturase erg5 further converts 5-dehydroepisterol into ergosta-5,7,22,24(28)-tetraen-3beta-ol by forming the C-22(23) double bond in the sterol side chain. Finally, ergosta-5,7,22,24(28)-tetraen-3beta-ol is substrate of the C-24(28) sterol reductase erg4 to produce ergosterol. In the genus Schizosaccharomyces, a second route exists between lanosterol and fecosterol, via the methylation of lanosterol to eburicol by erg6, followed by C14-demethylation by erg11/cyp1 and C4-demethylation by the demethylation complex erg25-erg26-erg27. The sequence is that of C-4 methylsterol oxidase erg25 from Schizosaccharomyces pombe (strain 972 / ATCC 24843) (Fission yeast).